The chain runs to 264 residues: Pimeloyl-[acyl-carrier protein] methyl ester esterase (264 aa).

Residues 23–244 (LVMLHGWGVN…MLAKASHAPF (222 aa)) enclose the AB hydrolase-1 domain. Substrate-binding positions include Trp29, 87-88 (SL), and 150-154 (FLAIQ). Ser87 acts as the Nucleophile in catalysis. Catalysis depends on residues Asp214 and His241. Residue His241 coordinates substrate.

It belongs to the AB hydrolase superfamily. Carboxylesterase BioH family. As to quaternary structure, monomer.

It is found in the cytoplasm. It catalyses the reaction 6-carboxyhexanoyl-[ACP] methyl ester + H2O = 6-carboxyhexanoyl-[ACP] + methanol + H(+). It participates in cofactor biosynthesis; biotin biosynthesis. The physiological role of BioH is to remove the methyl group introduced by BioC when the pimeloyl moiety is complete. It allows to synthesize pimeloyl-ACP via the fatty acid synthetic pathway through the hydrolysis of the ester bonds of pimeloyl-ACP esters. The polypeptide is Pimeloyl-[acyl-carrier protein] methyl ester esterase (Shewanella sp. (strain MR-7)).